A 253-amino-acid polypeptide reads, in one-letter code: Histone H1.4 (253 aa).

The span at 1–33 (MSDVAVAADTTETPAAPTKASKATKASKATKAS) shows a compositional bias: low complexity. Residues 1-43 (MSDVAVAADTTETPAAPTKASKATKASKATKASKATKAKTTKV) form a disordered region. S2 is modified (N-acetylserine). The region spanning 51-127 (AHPPFINMVT…GANGRFRLAE (77 aa)) is the H15 domain. Positions 134–253 (KSPAAAKKDA…KKAPAAAPEA (120 aa)) are disordered. Basic and acidic residues-rich tracts occupy residues 139–149 (AKKDATGEKKA) and 188–200 (AAGDKAKKTEVKV). 2 stretches are compositionally biased toward basic residues: residues 201-210 (KKVKSPKKIA) and 234-244 (APKKAAAKPAK).

This sequence belongs to the histone H1/H5 family.

It is found in the nucleus. The protein resides in the chromosome. Functionally, histones H1 are necessary for the condensation of nucleosome chains into higher-order structures. This chain is Histone H1.4 (hil-4), found in Caenorhabditis elegans.